The following is a 619-amino-acid chain: Large T antigen (619 aa).

One can recognise a J domain in the interval 10-73 (ELRGLLGTPD…ATTSQVPEYG (64 aa)). The short motif at 93 to 97 (LHCDE) is the LXCXE motif element. A compositionally biased stretch (acidic residues) spans 98-108 (ELEPSDNEEEN). The disordered stretch occupies residues 98–131 (ELEPSDNEEENPAGSQAPGSQATPPKKPRTSPDF). S102 is modified (phosphoserine; by host). A compositionally biased stretch (polar residues) spans 110–120 (AGSQAPGSQAT). T120 bears the Phosphothreonine; by host mark. Positions 121–128 (PPKKPRTS) match the Nuclear localization signal motif. The segment at residues 132–245 (PEVLKEYVSN…SQNIQGGLPS (114 aa)) is a DNA-binding region (T-ag OBD). The segment at 255–348 (EKSVNWKLIS…RRLDMKTLTR (94 aa)) adopts a T-ag D1-type zinc-finger fold. Zn(2+)-binding residues include C292, C295, H303, and H307. The SF3 helicase domain occupies 391-586 (NMPDVIFNYI…DDFTEKLQEC (196 aa)). An ATP-binding site is contributed by 417 to 424 (GPVNCGKT).

In terms of assembly, forms homohexamers in the presence of ATP. Interacts with host HDAC1. Interacts (via LXCXE domain) with host RB1; the interaction induces the aberrant dissociation of RB1-E2F1 complex thereby disrupting RB1's activity. Interacts (via LXCXE domain) with host pRB-related proteins RBL1 and RBL2. Interacts (via C-terminus) with host TOP1 and POLA1 allowing DNA replication. Interacts with host TP53, inhibiting TP53 binding to DNA. Interacts with host preinitiation complex components TBP, TFIIA and TFIID to regulate transcription initiation. It depends on Mg(2+) as a cofactor. In terms of processing, phosphorylated on both serine and threonine residues. Small t antigen inhibits the dephosphorylation by the AC form of PP2A. O-Glycosylated near the C-terminal region. Post-translationally, acetylated by CBP in a TP53-dependent manner.

It is found in the host nucleus. It carries out the reaction Couples ATP hydrolysis with the unwinding of duplex DNA by translocating in the 3'-5' direction.. It catalyses the reaction ATP + H2O = ADP + phosphate + H(+). In terms of biological role, isoform large T antigen is a key early protein essential for both driving viral replication and inducing cellular transformation. Plays a role in viral genome replication by driving entry of quiescent cells into the cell cycle and by autoregulating the synthesis of viral early mRNA. Displays highly oncogenic activities by corrupting the host cellular checkpoint mechanisms that guard cell division and the transcription, replication, and repair of DNA. Participates in the modulation of cellular gene expression preceeding viral DNA replication. This step involves binding to host key cell cycle regulators retinoblastoma protein RB1/pRb and TP53. Induces the disassembly of host E2F1 transcription factors from RB1, thus promoting transcriptional activation of E2F1-regulated S-phase genes. Inhibits host TP53 binding to DNA, abrogating the ability of TP53 to stimulate gene expression. Plays the role of a TFIID-associated factor (TAF) in transcription initiation for all three RNA polymerases, by stabilizing the TBP-TFIIA complex on promoters. Initiates viral DNA replication and unwinding via interactions with the viral origin of replication. Binds two adjacent sites in the SV40 origin. The replication fork movement is facilitated by Large T antigen helicase activity. Has processive 3'-5' DNA helicase activity which requires a short 3' single-stranded region and ATP. Activates the transcription of viral late mRNA, through host TBP and TFIIA stabilization. Interferes with histone deacetylation mediated by HDAC1, leading to activation of transcription. The chain is Large T antigen from Bovine polyomavirus (BPyV).